The following is a 405-amino-acid chain: Multifunctional CCA protein (405 aa).

The ATP site is built by glycine 8 and arginine 11. CTP-binding residues include glycine 8 and arginine 11. Positions 21 and 23 each coordinate Mg(2+). Arginine 91, arginine 137, and arginine 140 together coordinate ATP. Arginine 91, arginine 137, and arginine 140 together coordinate CTP. In terms of domain architecture, HD spans 228-329 (TGIHSMMVLE…NDFLDKCDVW (102 aa)).

The protein belongs to the tRNA nucleotidyltransferase/poly(A) polymerase family. Bacterial CCA-adding enzyme type 1 subfamily. Monomer. Can also form homodimers and oligomers. Mg(2+) is required as a cofactor. The cofactor is Ni(2+).

It carries out the reaction a tRNA precursor + 2 CTP + ATP = a tRNA with a 3' CCA end + 3 diphosphate. The catalysed reaction is a tRNA with a 3' CCA end + 2 CTP + ATP = a tRNA with a 3' CCACCA end + 3 diphosphate. In terms of biological role, catalyzes the addition and repair of the essential 3'-terminal CCA sequence in tRNAs without using a nucleic acid template. Adds these three nucleotides in the order of C, C, and A to the tRNA nucleotide-73, using CTP and ATP as substrates and producing inorganic pyrophosphate. tRNA 3'-terminal CCA addition is required both for tRNA processing and repair. Also involved in tRNA surveillance by mediating tandem CCA addition to generate a CCACCA at the 3' terminus of unstable tRNAs. While stable tRNAs receive only 3'-terminal CCA, unstable tRNAs are marked with CCACCA and rapidly degraded. The protein is Multifunctional CCA protein of Pseudoalteromonas atlantica (strain T6c / ATCC BAA-1087).